Reading from the N-terminus, the 1025-residue chain is Presequence protease, mitochondrial (1025 aa).

Residue His90 coordinates Zn(2+). The active-site Proton acceptor is Glu93. Residue His94 participates in Zn(2+) binding. Glu166 is an active-site residue. Residue Glu197 participates in Zn(2+) binding.

The protein belongs to the peptidase M16 family. PreP subfamily. As to quaternary structure, monomer and homodimer; homodimerization is induced by binding of the substrate. Requires Zn(2+) as cofactor.

The protein resides in the mitochondrion intermembrane space. Its subcellular location is the mitochondrion matrix. Its function is as follows. Degrades mitochondrial transit peptides after their cleavage in the intermembrane space or in the matrix, and presequence peptides; clearance of these peptides is required to keep the presequence processing machinery running. Preferentially cleaves the N-terminal side of paired basic amino acid residues. Also degrades other unstructured peptides. May function as an ATP-dependent peptidase as opposed to a metalloendopeptidase. This Aspergillus oryzae (strain ATCC 42149 / RIB 40) (Yellow koji mold) protein is Presequence protease, mitochondrial (cym1).